Reading from the N-terminus, the 181-residue chain is MKNTSIKTVVAIGIGAALFVIIGLFVPITIFTNTTISLQYAVQALFSVLFGPVAGFFIGFIGHMLKDMFAGYGVWWSWVLPSGLVGLGIGSLKNRLKVDKGIFSKKDILSFNLVQALVNLISWAIVAPLGDILIYQEPANKVFTQGLFAAFANTFTIGIGGTLLLIAYANSRPKAGSLRKD.

The next 5 membrane-spanning stretches (helical) occupy residues 11–31, 45–65, 69–89, 114–134, and 147–167; these read AIGI…ITIF, LFSV…GHML, FAGY…GLGI, VQAL…DILI, and LFAA…LLIA.

Belongs to the UPF0397 family.

It is found in the cell membrane. The protein is UPF0397 protein SUB0313 of Streptococcus uberis (strain ATCC BAA-854 / 0140J).